Here is a 319-residue protein sequence, read N- to C-terminus: MFQQMQKISLKLLKTTFLFLFATFILVGLPSTSQAYPIFAQQAYENPREATGRIVCANCHLAKKSVDIEVPQAVLPNTVFEAVVKIPYDIQLKQVLANGKKGGLNVGAVLILPEGFQIAPADRIPEEMKSKIGNLYYQPYSAEKKNIVVVGPIPGKTYQEIVFPILSPDPAKDKGTHFFKYPIYVGGNRGRGQIYPDGSKSNNNVYNASTTGKIIQITAKPKGGYILNIETPDGATIEEKIPAGPELIVSEGQSVKADQPLTKNPNVGGFGQTEGEIVLQNPARIQGLIAFFISVIIAQTFLVLKKKQFERVQLAEMNF.

Residues 1 to 35 form the signal peptide; sequence MFQQMQKISLKLLKTTFLFLFATFILVGLPSTSQA. Residues tyrosine 36, cysteine 56, cysteine 59, and histidine 60 each contribute to the heme site. A helical transmembrane segment spans residues 285–305; it reads IQGLIAFFISVIIAQTFLVLK.

Belongs to the cytochrome f family. The 4 large subunits of the cytochrome b6-f complex are cytochrome b6, subunit IV (17 kDa polypeptide, petD), cytochrome f and the Rieske protein, while the 4 small subunits are PetG, PetL, PetM and PetN. The complex functions as a dimer. It depends on heme as a cofactor.

It is found in the plastid. It localises to the chloroplast thylakoid membrane. Its function is as follows. Component of the cytochrome b6-f complex, which mediates electron transfer between photosystem II (PSII) and photosystem I (PSI), cyclic electron flow around PSI, and state transitions. The polypeptide is Cytochrome f (Chlorokybus atmophyticus (Soil alga)).